Here is a 208-residue protein sequence, read N- to C-terminus: Protein Nef (208 aa).

Residue Gly2 is the site of N-myristoyl glycine; by host attachment. Ser6 carries the post-translational modification Phosphoserine; by host. Residues Ile16–Thr51 form a disordered region. An acidic; interacts with host PACS1 and PACS2; stabilizes the interaction of NEF/MHC-I with host AP1M1; necessary for MHC-I internalization region spans residues Glu65–Glu68. Positions Pro72 to Pro81 are SH3-binding; interaction with Src family tyrosine kinases. A PxxP; stabilizes the interaction of NEF/MHC-I with host AP1M1; necessary for MHC-I internalization motif is present at residues Pro75–Pro78. The segment at Glu111 to Trp127 is mediates dimerization, Nef-PTE1 interaction. A binding to ATP6V1H region spans residues Val151–Val183. Positions Leu167–Leu168 match the Dileucine internalization motif; necessary for CD4 internalization motif. The Diacidic; necessary for CD4 internalization motif lies at Glu177–Asp178.

It belongs to the lentivirus primate group Nef protein family. Monomer; cytosolic form. Homodimer; membrane bound form. Interacts with Nef associated p21-activated kinase (PAK2); this interaction activates PAK2. Associates with the Nef-MHC-I-AP1 complex; this complex is required for MHC-I internalization. Interacts (via C-terminus) with host PI3-kinase. Interacts with host PACS1; this interaction seems to be weak. Interacts with host PACS2. Interacts with host LCK and MAPK3; these interactions inhibit the kinase activity of the latter. Interacts with host ATP6V1H; this interaction may play a role in CD4 endocytosis. Associates with the CD4-Nef-AP2 complex; this complex is required for CD4 internalization. Interacts with host AP2 subunit alpha and AP2 subunit sigma2. Interacts with TCR-zeta chain; this interaction up-regulates the Fas ligand (FasL) surface expression. Interacts with host HCK, LYN, and SRC; these interactions activate the Src family kinases. Interacts with MAP3K5; this interaction inhibits the Fas and TNFR-mediated death signals. Interacts with beta-COP and PTE1. Interacts with human RACK1; this increases Nef phosphorylation by PKC. Interacts with TP53; this interaction decreases the half-life of TP53, protecting the infected cell against p53-mediated apoptosis. The virion-associated Nef proteins are cleaved by the viral protease to release the soluble C-terminal core protein. Nef is probably cleaved concomitantly with viral structural proteins on maturation of virus particles. Post-translationally, myristoylated. In terms of processing, phosphorylated on serine residues, probably by host PKCdelta and theta.

The protein localises to the host cell membrane. Its subcellular location is the virion. It is found in the secreted. It localises to the host Golgi apparatus membrane. Functionally, factor of infectivity and pathogenicity, required for optimal virus replication. Alters numerous pathways of T-lymphocyte function and down-regulates immunity surface molecules in order to evade host defense and increase viral infectivity. Alters the functionality of other immunity cells, like dendritic cells, monocytes/macrophages and NK cells. Its function is as follows. In infected CD4(+) T-lymphocytes, down-regulates the surface MHC-I, mature MHC-II, CD4, CD28, CCR5 and CXCR4 molecules. Mediates internalization and degradation of host CD4 through the interaction of with the cytoplasmic tail of CD4, the recruitment of AP-2 (clathrin adapter protein complex 2), internalization through clathrin coated pits, and subsequent transport to endosomes and lysosomes for degradation. Diverts host MHC-I molecules to the trans-Golgi network-associated endosomal compartments by an endocytic pathway to finally target them for degradation. MHC-I down-regulation may involve AP-1 (clathrin adapter protein complex 1) or possibly Src family kinase-ZAP70/Syk-PI3K cascade recruited by PACS2. In consequence infected cells are masked for immune recognition by cytotoxic T-lymphocytes. Decreasing the number of immune receptors also prevents reinfection by more HIV particles (superinfection). Down-regulates host SERINC3 and SERINC5 thereby excluding these proteins from the viral particles. Virion infectivity is drastically higher when SERINC3 or SERINC5 are excluded from the viral envelope, because these host antiviral proteins impair the membrane fusion event necessary for subsequent virion penetration. In terms of biological role, bypasses host T-cell signaling by inducing a transcriptional program nearly identical to that of anti-CD3 cell activation. Interaction with TCR-zeta chain up-regulates the Fas ligand (FasL). Increasing surface FasL molecules and decreasing surface MHC-I molecules on infected CD4(+) cells send attacking cytotoxic CD8+ T-lymphocytes into apoptosis. Plays a role in optimizing the host cell environment for viral replication without causing cell death by apoptosis. Protects the infected cells from apoptosis in order to keep them alive until the next virus generation is ready to strike. Inhibits the Fas and TNFR-mediated death signals by blocking MAP3K5/ASK1. Decreases the half-life of TP53, protecting the infected cell against p53-mediated apoptosis. Inhibits the apoptotic signals regulated by the Bcl-2 family proteins through the formation of a Nef/PI3-kinase/PAK2 complex that leads to activation of PAK2 and induces phosphorylation of host BAD. Functionally, extracellular Nef protein targets CD4(+) T-lymphocytes for apoptosis by interacting with CXCR4 surface receptors. The protein is Protein Nef of Human immunodeficiency virus type 1 group M subtype F1 (isolate 93BR020) (HIV-1).